A 345-amino-acid polypeptide reads, in one-letter code: Variable large protein 23 (345 aa).

The first 18 residues, 1–18 (MRKRISAIIMTLFMVLVS), serve as a signal peptide directing secretion. A lipid anchor (N-palmitoyl cysteine) is attached at C19. C19 carries the S-diacylglycerol cysteine lipid modification.

It belongs to the variable large protein (Vlp) family. Delta subfamily.

It is found in the cell outer membrane. Functionally, the Vlp and Vsp proteins are antigenically distinct proteins, only one vlp or vsp gene is transcriptionally active at any one time. Switching between these genes is a mechanism of host immune response evasion. The sequence is that of Variable large protein 23 from Borrelia hermsii.